Reading from the N-terminus, the 433-residue chain is Urokinase-type plasminogen activator (433 aa).

The first 20 residues, 1 to 20 (MRVLLACLLVCALVVSDSDG), serve as a signal peptide directing secretion. An EGF-like domain is found at 29 to 65 (GESNCGCLNGGKCVTYKYFSNIQRCSCPKKFQGEHCE). Intrachain disulfides connect C33–C41, C35–C53, C55–C64, C72–C153, C93–C135, and C124–C148. The binds urokinase plasminogen activator surface receptor stretch occupies residues 36–59 (LNGGKCVTYKYFSNIQRCSCPKKF). Positions 72-153 (CYQGNGHSYR…FVQFCMVQDC (82 aa)) constitute a Kringle domain. The connecting peptide stretch occupies residues 154–180 (SVGKSPSSPREKEEFQCGQKALRPRFK). The residue at position 160 (S160) is a Phosphoserine. 6 disulfides stabilise this stretch: C170–C301, C211–C227, C219–C290, C315–C384, C347–C363, and C374–C402. In terms of domain architecture, Peptidase S1 spans 181–426 (IVGGQVTNAE…FLPWINTHTR (246 aa)). Residues H226 and D277 each act as charge relay system in the active site. Catalysis depends on S378, which acts as the Charge relay system.

Belongs to the peptidase S1 family. In terms of assembly, found in high and low molecular mass forms. Each consists of two chains, A and B. The high molecular mass form contains a long chain A which is cleaved to yield a short chain A. Forms heterodimer with SERPINA5. Binds LRP1B; binding is followed by internalization and degradation. Interacts with MRC2. Interacts with PLAUR. In complex with SERPINE1, interacts with PLAUR/uPAR. Interacts with SORL1 and LRP1, either alone or in complex with SERPINE1; these interactions are abolished in the presence of LRPAP1/RAP. The ternary complex composed of PLAUR-PLAU-PAI1 also interacts with SORLA. Produced as an inactive single-chain protein (pro-uPA or sc-uPA), is processed into the active disulfide-linked two-chain form of PLAU/uPA by a proteolytic event mediated, at least, by TMPRSS4.

The protein localises to the secreted. It carries out the reaction Specific cleavage of Arg-|-Val bond in plasminogen to form plasmin.. With respect to regulation, inhibited by SERPINA5. Inhibited by SERPINE1. Functionally, specifically cleaves the zymogen plasminogen to form the active enzyme plasmin. This is Urokinase-type plasminogen activator (PLAU) from Bos taurus (Bovine).